The sequence spans 608 residues: Glutamyl-tRNA(Gln) amidotransferase subunit E (608 aa).

Residues 401–428 form a disordered region; that stretch reads PEETRAANPDGTTRFLRPRPGAARMYPE.

It belongs to the GatB/GatE family. GatE subfamily. As to quaternary structure, heterodimer of GatD and GatE.

It carries out the reaction L-glutamyl-tRNA(Gln) + L-glutamine + ATP + H2O = L-glutaminyl-tRNA(Gln) + L-glutamate + ADP + phosphate + H(+). In terms of biological role, allows the formation of correctly charged Gln-tRNA(Gln) through the transamidation of misacylated Glu-tRNA(Gln) in organisms which lack glutaminyl-tRNA synthetase. The reaction takes place in the presence of glutamine and ATP through an activated gamma-phospho-Glu-tRNA(Gln). The GatDE system is specific for glutamate and does not act on aspartate. The protein is Glutamyl-tRNA(Gln) amidotransferase subunit E of Pyrobaculum arsenaticum (strain DSM 13514 / JCM 11321 / PZ6).